The primary structure comprises 1046 residues: Translation initiation factor IF-2 (1046 aa).

The tract at residues 49–448 (EAFPAEGSAP…MGAMVPRGNG (400 aa)) is disordered. A compositionally biased stretch (low complexity) spans 52-71 (PAEGSAPSSRPGGRPGNGAR). Pro residues predominate over residues 94–111 (RPGPGGRPVPGRPGPAPL). 2 stretches are compositionally biased toward low complexity: residues 112-139 (PGAS…SQPV) and 147-159 (PRPA…AAAP). The segment covering 160 to 176 (APAPSAPAPAPSAPAPA) has biased composition (pro residues). The span at 177–187 (PITSAPTAATP) shows a compositional bias: low complexity. Positions 188 to 206 (PAAPQRPTPGGPRPGPAAP) are enriched in pro residues. A compositionally biased stretch (gly residues) spans 210 to 222 (RTGGPGGPGGPGG). The segment covering 223–235 (GPRPGPRPGPRPA) has biased composition (pro residues). A compositionally biased stretch (low complexity) spans 244 to 253 (SPAAGPRAAS). 2 stretches are compositionally biased toward pro residues: residues 260-281 (SAPP…PRPG) and 304-314 (RPTPGQMPPRP). A compositionally biased stretch (low complexity) spans 320–333 (PRPNSNMFQPRPAG). Gly residues predominate over residues 334-414 (GAPGRPGGGG…AGAFGPGGRG (81 aa)). The segment covering 415 to 426 (RPGRQRKSKRAK) has biased composition (basic residues). The region spanning 539–711 (ARPPVVTVMG…VILTADASLD (173 aa)) is the tr-type G domain. Residues 548 to 555 (GHVDHGKT) are G1. Residue 548-555 (GHVDHGKT) participates in GTP binding. Residues 573 to 577 (GITQH) form a G2 region. The interval 598-601 (DTPG) is G3. GTP-binding positions include 598–602 (DTPGH) and 652–655 (NKVD). Residues 652–655 (NKVD) are G4. The G5 stretch occupies residues 688 to 690 (SAR).

The protein belongs to the TRAFAC class translation factor GTPase superfamily. Classic translation factor GTPase family. IF-2 subfamily.

The protein localises to the cytoplasm. One of the essential components for the initiation of protein synthesis. Protects formylmethionyl-tRNA from spontaneous hydrolysis and promotes its binding to the 30S ribosomal subunits. Also involved in the hydrolysis of GTP during the formation of the 70S ribosomal complex. The protein is Translation initiation factor IF-2 of Parafrankia sp. (strain EAN1pec).